Consider the following 843-residue polypeptide: Protein P (843 aa).

The segment at 1 to 177 (MPLSYQHFRK…FCGSPYSWEQ (177 aa)) is terminal protein domain (TP). The interval 178–346 (DLQHGRLVFQ…YCLCHIVNLI (169 aa)) is spacer. Disordered regions lie at residues 220–258 (KSRL…VGVE) and 292–319 (SKGH…SQGS). Residues 308–319 (PPNSSRSQSQGS) show a composition bias toward low complexity. The tract at residues 347 to 690 (DDWGPCAEHG…YLNLYPVARQ (344 aa)) is polymerase/reverse transcriptase domain (RT). One can recognise a Reverse transcriptase domain in the interval 357–600 (EHRIRTPRTP…YSLNFMGYVI (244 aa)). Residues Asp-429, Asp-551, and Asp-552 each contribute to the Mg(2+) site.

The protein belongs to the hepadnaviridae P protein family.

It catalyses the reaction DNA(n) + a 2'-deoxyribonucleoside 5'-triphosphate = DNA(n+1) + diphosphate. The enzyme catalyses Endonucleolytic cleavage to 5'-phosphomonoester.. With respect to regulation, activated by host HSP70 and HSP40 in vitro to be able to bind the epsilon loop of the pgRNA. Because deletion of the RNase H region renders the protein partly chaperone-independent, the chaperones may be needed indirectly to relieve occlusion of the RNA-binding site by this domain. Inhibited by several reverse-transcriptase inhibitors: Lamivudine, Adefovir and Entecavir. Multifunctional enzyme that converts the viral RNA genome into dsDNA in viral cytoplasmic capsids. This enzyme displays a DNA polymerase activity that can copy either DNA or RNA templates, and a ribonuclease H (RNase H) activity that cleaves the RNA strand of RNA-DNA heteroduplexes in a partially processive 3'- to 5'-endonucleasic mode. Neo-synthesized pregenomic RNA (pgRNA) are encapsidated together with the P protein, and reverse-transcribed inside the nucleocapsid. Initiation of reverse-transcription occurs first by binding the epsilon loop on the pgRNA genome, and is initiated by protein priming, thereby the 5'-end of (-)DNA is covalently linked to P protein. Partial (+)DNA is synthesized from the (-)DNA template and generates the relaxed circular DNA (RC-DNA) genome. After budding and infection, the RC-DNA migrates in the nucleus, and is converted into a plasmid-like covalently closed circular DNA (cccDNA). The activity of P protein does not seem to be necessary for cccDNA generation, and is presumably released from (+)DNA by host nuclear DNA repair machinery. This is Protein P from Hepatitis B virus genotype B1 (isolate Japan/Yamagata-2/1998) (HBV-B).